The primary structure comprises 398 residues: Acetate kinase (398 aa).

Asn8 is a Mg(2+) binding site. Lys15 serves as a coordination point for ATP. Arg89 provides a ligand contact to substrate. The Proton donor/acceptor role is filled by Asp146. ATP-binding positions include His206–Gly210, Asp283–Arg285, and Gly331–Asn335. A Mg(2+)-binding site is contributed by Glu383.

The protein belongs to the acetokinase family. As to quaternary structure, homodimer. It depends on Mg(2+) as a cofactor. Mn(2+) is required as a cofactor.

Its subcellular location is the cytoplasm. The catalysed reaction is acetate + ATP = acetyl phosphate + ADP. Its pathway is metabolic intermediate biosynthesis; acetyl-CoA biosynthesis; acetyl-CoA from acetate: step 1/2. Functionally, catalyzes the formation of acetyl phosphate from acetate and ATP. Can also catalyze the reverse reaction. The protein is Acetate kinase of Streptococcus pyogenes serotype M4 (strain MGAS10750).